We begin with the raw amino-acid sequence, 534 residues long: Zinc finger protein 69 homolog B (534 aa).

Glycyl lysine isopeptide (Lys-Gly) (interchain with G-Cter in SUMO2) cross-links involve residues K37 and K40. A KRAB domain is found at 74–145 (LTFKDVSVDF…ERDISGVPSS (72 aa)). Glycyl lysine isopeptide (Lys-Gly) (interchain with G-Cter in SUMO2) cross-links involve residues K178 and K235. 9 C2H2-type zinc fingers span residues 279–301 (FECN…MRIH), 307–329 (FRCK…QRIH), 335–357 (YECK…VRIH), 363–385 (YECR…LRTH), 391–413 (FTCK…EIIH), 419–441 (YICN…QRTH), 447–469 (YKCK…QRVH), 475–497 (YECS…QRIH), and 503–525 (YDCN…CKTH).

This sequence belongs to the krueppel C2H2-type zinc-finger protein family.

The protein localises to the nucleus. May be involved in transcriptional regulation. Essential for Golgi structural integrity. The sequence is that of Zinc finger protein 69 homolog B (ZFP69B) from Homo sapiens (Human).